A 365-amino-acid chain; its full sequence is Mannose-1-phosphate guanylyltransferase catalytic subunit beta (365 aa).

The segment at 2-221 is substrate-binding domain; sequence KALILVGGYG…PGFWMDVGQP (220 aa). A GDP-alpha-D-mannose-binding site is contributed by aspartate 109. Aspartate 109 is a binding site for Mg(2+). Lysine 161 is a catalytic residue. Position 217 (aspartate 217) interacts with GDP-alpha-D-mannose. Mg(2+) is bound at residue aspartate 217. The interval 244-365 is hexapeptide repeat domain; that stretch reads ETGSNIHPTA…VNVPSKDIIM (122 aa).

Belongs to the transferase hexapeptide repeat family. Component of the GMPPA-GMPPB mannose-1-phosphate guanylyltransferase complex composed of 4 GMPPA subunits and 8 tag-335/GMPPB subunits; the complex is organized into three layers, a central layer made up of 2 GMPPA dimers sandwiched between two layers each made up of 2 tag-335/GMPPB dimers. Catalytic activity of tag-335/GMPPB is reduced when part of the complex and binding of GDP-alpha-D-Mannose by GMPPA induces allosteric feedback inhibition of tag-335/GMPPB. The cofactor is Mg(2+).

It carries out the reaction alpha-D-mannose 1-phosphate + GTP + H(+) = GDP-alpha-D-mannose + diphosphate. It participates in nucleotide-sugar biosynthesis; GDP-alpha-D-mannose biosynthesis; GDP-alpha-D-mannose from alpha-D-mannose 1-phosphate (GTP route): step 1/1. Enzyme activity is reduced by incorporation into the GMPPA-GMPPB mannose-1-phosphate guanylyltransferase complex. Allosterically inhibited, when part of the GMPPA-GMPPB complex, by GDP-alpha-D-mannose binding to GMPPA. Functionally, catalytic subunit of the GMPPA-GMPPB mannose-1-phosphate guanylyltransferase complex. Catalyzes the formation of GDP-mannose, an essential precursor of glycan moieties of glycoproteins and glycolipids. Can catalyze the reverse reaction in vitro. Together with GMPPA regulates GDP-alpha-D-mannose levels. The sequence is that of Mannose-1-phosphate guanylyltransferase catalytic subunit beta (tag-335) from Caenorhabditis elegans.